A 171-amino-acid polypeptide reads, in one-letter code: MNTRQSSFSYEEILICGRGEMFGPGNAQLPLPPMLMFNRITDISETGGPNDKGYVRAEFDITPDLWFFPCHFMGDPVMPGCLGLDAMWQLTGFFLGWLGEAGKGRAISTGEVKFTGMVTPKTKLVEYGIDFKRVMRGRLVLGIADGWMKADGETIYKATDLRVGLFQEKAD.

His-71 is an active-site residue.

The protein belongs to the thioester dehydratase family. FabA subfamily. As to quaternary structure, homodimer.

Its subcellular location is the cytoplasm. It carries out the reaction a (3R)-hydroxyacyl-[ACP] = a (2E)-enoyl-[ACP] + H2O. It catalyses the reaction (3R)-hydroxydecanoyl-[ACP] = (2E)-decenoyl-[ACP] + H2O. The catalysed reaction is (2E)-decenoyl-[ACP] = (3Z)-decenoyl-[ACP]. The protein operates within lipid metabolism; fatty acid biosynthesis. Its function is as follows. Necessary for the introduction of cis unsaturation into fatty acids. Catalyzes the dehydration of (3R)-3-hydroxydecanoyl-ACP to E-(2)-decenoyl-ACP and then its isomerization to Z-(3)-decenoyl-ACP. Can catalyze the dehydratase reaction for beta-hydroxyacyl-ACPs with saturated chain lengths up to 16:0, being most active on intermediate chain length. This is 3-hydroxydecanoyl-[acyl-carrier-protein] dehydratase from Rhizobium meliloti (strain 1021) (Ensifer meliloti).